The sequence spans 436 residues: UPF0597 protein YhaM (436 aa).

It belongs to the UPF0597 family.

In terms of biological role, thought to be a D-serine dehydratase, however it does not complement a dsdA (D-serine dehydratase) mutant in strain CFT073, suggesting it may not have that function. The chain is UPF0597 protein YhaM from Escherichia coli O157:H7.